The following is a 252-amino-acid chain: Probable transcriptional regulatory protein all4276 (252 aa).

The protein belongs to the TACO1 family.

The protein resides in the cytoplasm. This is Probable transcriptional regulatory protein all4276 from Nostoc sp. (strain PCC 7120 / SAG 25.82 / UTEX 2576).